The chain runs to 280 residues: Diaminopimelate epimerase (280 aa).

Residues Asn13 and Asn64 each coordinate substrate. Cys73 serves as the catalytic Proton donor. Substrate contacts are provided by residues 74–75 (GN), Asn164, Asn197, and 215–216 (ER). Cys224 serves as the catalytic Proton acceptor. Position 225 to 226 (225 to 226 (GT)) interacts with substrate.

It belongs to the diaminopimelate epimerase family. Homodimer.

It localises to the cytoplasm. The enzyme catalyses (2S,6S)-2,6-diaminopimelate = meso-2,6-diaminopimelate. It functions in the pathway amino-acid biosynthesis; L-lysine biosynthesis via DAP pathway; DL-2,6-diaminopimelate from LL-2,6-diaminopimelate: step 1/1. Its function is as follows. Catalyzes the stereoinversion of LL-2,6-diaminopimelate (L,L-DAP) to meso-diaminopimelate (meso-DAP), a precursor of L-lysine and an essential component of the bacterial peptidoglycan. This is Diaminopimelate epimerase from Leptospira biflexa serovar Patoc (strain Patoc 1 / Ames).